The primary structure comprises 460 residues: C4-dicarboxylate transport protein (460 aa).

The next 9 helical transmembrane spans lie at 20-40 (SLYF…HFYP), 56-76 (LIKM…IAGM), 88-108 (YALL…LIVV), 153-173 (IVGA…VIFG), 200-220 (IINM…AFTI), 234-254 (LMIC…GAIC), 301-321 (VVGL…SIYL), 342-362 (ITLL…TGSG), and 364-384 (IVLA…LALI). The tract at residues 438–460 (PEDDLGVAEGPTPANAVNTTKTV) is disordered.

The protein belongs to the dicarboxylate/amino acid:cation symporter (DAACS) (TC 2.A.23) family.

The protein resides in the cell inner membrane. Functionally, responsible for the transport of dicarboxylates such as succinate, fumarate, and malate from the periplasm across the membrane. The sequence is that of C4-dicarboxylate transport protein from Pseudomonas savastanoi pv. phaseolicola (strain 1448A / Race 6) (Pseudomonas syringae pv. phaseolicola (strain 1448A / Race 6)).